The following is a 163-amino-acid chain: Troponin C (163 aa).

At Ser1 the chain carries N-acetylserine. 4 EF-hand domains span residues 14-49 (EQIS…LGMS), 50-85 (ISRE…AMQD), 90-125 (IPDD…CAGD), and 127-162 (LTDD…LKVR). An N6,N6-dimethyllysine; alternate modification is found at Lys20. An N6-methyllysine; alternate modification is found at Lys20. Ca(2+) contacts are provided by Asp27, Asp29, Asp33, Glu38, Asp63, Asp65, Ser67, Thr69, Glu74, Asp103, Asn105, Asp107, and Glu114.

This sequence belongs to the troponin C family.

Troponin is the central regulatory protein of striated muscle contraction. Tn consists of three components: Tn-I which is the inhibitor of actomyosin ATPase, Tn-T which contains the binding site for tropomyosin and Tn-C. The binding of calcium to Tn-C abolishes the inhibitory action of Tn on actin filaments. The polypeptide is Troponin C (Branchiostoma lanceolatum (Common lancelet)).